We begin with the raw amino-acid sequence, 188 residues long: CyanoP (188 aa).

Residues M1 to A23 form the signal peptide. C24 carries N-palmitoyl cysteine lipidation. C24 carries the S-diacylglycerol cysteine lipid modification.

The protein belongs to the PsbP family. CyanoP subfamily. Monomer. Present in about 3% of photosystem II (PSII) preparations. Purifies with partially assembled PSII complexes, in addition to a small amount of monomeric and dimeric PSII, and trimeric PSI.

It localises to the cellular thylakoid membrane. Functionally, plays a role in the early stages of photosystem II (PSII) assembly; binds to D2 (psbD) and may facilitate its incorporation into PSII. Required for optimal photoautotrophic growth in the absence of Ca(2+) or Cl(-), functions in optimizing PSII water oxidation/O(2) evolving activity. Might be involved in assembly of the oxygen evolving complex. This chain is CyanoP, found in Synechocystis sp. (strain ATCC 27184 / PCC 6803 / Kazusa).